We begin with the raw amino-acid sequence, 816 residues long: Leucine--tRNA ligase (816 aa).

The short motif at 46-56 (PYPSGALHMGH) is the 'HIGH' region element. The short motif at 638–642 (KMSKS) is the 'KMSKS' region element. Position 641 (K641) interacts with ATP.

It belongs to the class-I aminoacyl-tRNA synthetase family.

The protein localises to the cytoplasm. It catalyses the reaction tRNA(Leu) + L-leucine + ATP = L-leucyl-tRNA(Leu) + AMP + diphosphate. The sequence is that of Leucine--tRNA ligase from Xanthomonas campestris pv. campestris (strain ATCC 33913 / DSM 3586 / NCPPB 528 / LMG 568 / P 25).